The following is a 312-amino-acid chain: Small kinetochore-associated protein (312 aa).

Residues 1–13 (MATHKAEAQETDF) show a composition bias toward basic and acidic residues. 3 disordered regions span residues 1–32 (MATHKAEAQETDFRTTGPPTDLEQCPFPPSSR), 55–176 (LKRS…KDKN), and 221–242 (KGLNSGQETQESKQEPSTDPTD). Positions 75–84 (RPTTMASSKT) are enriched in polar residues. 2 stretches are compositionally biased toward basic and acidic residues: residues 131–143 (DVTKVTKPRRENG) and 166–176 (QKPEEDLKDKN). The interaction with SPAG5 stretch occupies residues 156–312 (IRSSYKPLSK…LEEMEQLLEM (157 aa)). Positions 169–210 (EEDLKDKNELLEAVNKQLHQKLTETQGELKDLTQKVELLEKF) form a coiled coil. A coiled-coil region spans residues 246-288 (LLETLKDELKLFNETAKKQMEELQALKVKLKLKEKERIQFLEQ).

Part of an astrin (SPAG5)-kinastrin (SKAP) complex containing KNSTRN, SPAG5, PLK1, DYNLL1 and SGO2. Interacts with SPAG5. Directly binds to microtubules, although at relatively low affinity. Interacts with CENPE; this interaction greatly favors microtubule-binding. Interacts with DSN1/MIS13; leading to localization to kinetochores. Interacts with MAPRE1/EB1; leading to localization to the microtubule plus ends. Interacts with PRPF19. Interacts with DYNLL1. Interacts with MAP4.

It localises to the nucleus. It is found in the chromosome. The protein resides in the centromere. Its subcellular location is the kinetochore. The protein localises to the cytoplasm. It localises to the cytoskeleton. It is found in the spindle pole. The protein resides in the microtubule organizing center. Functionally, essential component of the mitotic spindle required for faithful chromosome segregation and progression into anaphase. Promotes the metaphase-to-anaphase transition and is required for chromosome alignment, normal timing of sister chromatid segregation, and maintenance of spindle pole architecture. The astrin (SPAG5)-kinastrin (SKAP) complex promotes stable microtubule-kinetochore attachments. Required for kinetochore oscillations and dynamics of microtubule plus-ends during live cell mitosis, possibly by forming a link between spindle microtubule plus-ends and mitotic chromosomes to achieve faithful cell division. The protein is Small kinetochore-associated protein (Knstrn) of Rattus norvegicus (Rat).